We begin with the raw amino-acid sequence, 372 residues long: Ligninase B (372 aa).

A signal peptide spans 1–21; sequence MAFKQLFAAISLALSLSAANA. Residues 22 to 28 constitute a propeptide that is removed on maturation; the sequence is AAVIEKR. Cystine bridges form between C31-C43, C42-C313, C62-C148, and C277-C345. H75 acts as the Proton acceptor in catalysis. Ca(2+) is bound by residues D76, G94, D96, and S98. H204 contributes to the heme b binding site. Residues S205, D222, T224, I227, and D229 each contribute to the Ca(2+) site. N285 carries N-linked (GlcNAc...) asparagine glycosylation. A compositionally biased stretch (low complexity) spans 350 to 361; sequence FPTLTTLPGPET. The disordered stretch occupies residues 350-372; that stretch reads FPTLTTLPGPETSVQRIPPPPGA.

This sequence belongs to the peroxidase family. Ligninase subfamily. Heme b serves as cofactor. Requires Ca(2+) as cofactor.

The catalysed reaction is 1-(3,4-dimethoxyphenyl)-2-(2-methoxyphenoxy)propane-1,3-diol + H2O2 = 3,4-dimethoxybenzaldehyde + guaiacol + glycolaldehyde + H2O. The enzyme catalyses 2 (3,4-dimethoxyphenyl)methanol + H2O2 = 2 (3,4-dimethoxyphenyl)methanol radical + 2 H2O. Its pathway is secondary metabolite metabolism; lignin degradation. In terms of biological role, depolymerization of lignin. Catalyzes the C(alpha)-C(beta) cleavage of the propyl side chains of lignin. This chain is Ligninase B (LIPB), found in Phanerodontia chrysosporium (White-rot fungus).